The following is a 1008-amino-acid chain: Phytosulfokine receptor 1 (1008 aa).

An N-terminal signal peptide occupies residues M1–S25. N55, N64, and N73 each carry an N-linked (GlcNAc...) asparagine glycan. LRR repeat units follow at residues T75 to K98, L99 to L123, K124 to A148, Q150 to N170, T172 to K194, C195 to L219, R221 to L243, S244 to E266, S291 to M315, I316 to C339, R341 to N362, and F363 to Q387. An N-linked (GlcNAc...) asparagine glycan is attached at N106. 3 N-linked (GlcNAc...) asparagine glycosylation sites follow: N160, N170, and N187. An N-linked (GlcNAc...) asparagine glycan is attached at N242. R300 serves as a coordination point for phytosulfokine. N301 and N311 each carry an N-linked (GlcNAc...) asparagine glycan. 3 residues coordinate phytosulfokine: N346, S370, and S372. N373, N378, and N391 each carry an N-linked (GlcNAc...) asparagine glycan. 4 LRR repeats span residues L392 to F414, E415 to S438, N439 to A464, and F466 to L486. The phytosulfokine site is built by T398, N424, and D445. N-linked (GlcNAc...) asparagine glycosylation is found at N472 and N493. Residue K508 coordinates phytosulfokine. N-linked (GlcNAc...) asparagine glycans are attached at residues N510 and N534. LRR repeat units follow at residues I521–N545, L546–M570, T571–L594, and F596–T619. Residues N606 and N622 are each glycosylated (N-linked (GlcNAc...) asparagine). A helical membrane pass occupies residues M660–L680. A Phosphothreonine modification is found at T731. Positions F734 to L1005 constitute a Protein kinase domain. Residues I740–V748 and K762 each bind ATP. Phosphotyrosine occurs at positions 807 and 847. D860 functions as the Proton acceptor in the catalytic mechanism. Y902 is modified (phosphotyrosine).

Belongs to the protein kinase superfamily. Ser/Thr protein kinase family. As to quaternary structure, homo- and heterodimers with PSY1R. Heterodimers with the somatic embryogenesis receptor-like kinases (SERKs). PSK is not directly involved in PSKR-SERK interaction but stabilizes PSKR island domain for recruitment of a SERK. Part of a functional complex containing PSKR1, BAK1, CNGC17, and AHA. Interacts with AHA1, AHA2, and BAK1, but not with CNGC17 or BRI1. Requires Mg(2+) as cofactor. The cofactor is Mn(2+). As to expression, weakly expressed in roots, leaves, stems and flowers. Expressed in the primary and lateral roots, including root primordia and root tips, but not in the hypocotyl.

It localises to the cell membrane. The catalysed reaction is L-seryl-[protein] + ATP = O-phospho-L-seryl-[protein] + ADP + H(+). The enzyme catalyses L-threonyl-[protein] + ATP = O-phospho-L-threonyl-[protein] + ADP + H(+). It catalyses the reaction GTP = 3',5'-cyclic GMP + diphosphate. CGMP suppresses kinase activity. In terms of biological role, phytosulfokine receptor with both a serine/threonine-protein kinase activity and a guanylate cyclase activity. Regulates, in response to phytosulfokine binding, a signaling cascade involved in plant cell differentiation, organogenesis, somatic embryogenesis, cellular proliferation and plant growth. Involved in plant immunity, with antagonistic effects on bacterial and fungal resistances. Not involved in PSY perception. CNGC17 and AHAs form a functional cation-translocating unit that is activated by PSKR1/BAK1 and possibly other BAK1/RLK complexes. This is Phytosulfokine receptor 1 from Arabidopsis thaliana (Mouse-ear cress).